A 336-amino-acid chain; its full sequence is Potassium channel subfamily K member 1 (336 aa).

The Cytoplasmic portion of the chain corresponds to 1 to 20; that stretch reads MLQSLAGSSCVRLVERHRSA. Residues 21 to 41 form a helical membrane-spanning segment; that stretch reads RCFGFLVLGYLLYLVFGAVVF. Residues 42 to 103 are Extracellular-facing; that stretch reads SSVELPYEDL…SNASGNWNWD (62 aa). Residue N95 is glycosylated (N-linked (GlcNAc...) asparagine). The segment at residues 104-116 is an intramembrane region (helical); it reads FTSALFFASTVLS. The stretch at 117-122 is an intramembrane region; sequence TTGYGH. The segment at 117–122 is selectivity filter 1; that stretch reads TTGYGH. The Extracellular segment spans residues 123–132; it reads TVPLSDGGKA. Residues 133 to 156 form a helical membrane-spanning segment; the sequence is FCIIYSVIGIPFTLLFLTAVVQRI. The Cytoplasmic portion of the chain corresponds to 157–181; sequence TVHVTRRPVLYFHIRWGFSKQVVAI. The helical transmembrane segment at 182–202 threads the bilayer; sequence VHAVLLGFVTVSCFFFIPAAV. Residues 203 to 211 are Extracellular-facing; the sequence is FSVLEDDWN. An intramembrane region (helical) is located at residues 212-224; sequence FLESFYFCFISLS. The selectivity filter 2 stretch occupies residues 225–230; the sequence is TIGLGD. An intramembrane segment occupies 225-231; the sequence is TIGLGDY. Residues 232 to 243 lie on the Extracellular side of the membrane; sequence VPGEGYNQKFRE. Residues 244–267 traverse the membrane as a helical segment; sequence LYKIGITCYLLLGLIAMLVVLETF. The Cytoplasmic portion of the chain corresponds to 268 to 336; the sequence is CELHELKKFR…SACMDGPANH (69 aa). K274 is covalently cross-linked (Glycyl lysine isopeptide (Lys-Gly) (interchain with G-Cter in SUMO)). The important for intracellular retention in recycling endosomes stretch occupies residues 293–299; the sequence is IIEHDQL. Residues 315–336 form a disordered region; sequence QKQNEPFVATQSSACMDGPANH. At S326 the chain carries Phosphoserine.

Belongs to the two pore domain potassium channel (TC 1.A.1.8) family. In terms of assembly, homodimer; disulfide-linked. Heterodimer with KCNK2; disulfide-linked. In astrocytes, forms mostly heterodimeric potassium channels with KCNK2, with only a minor proportion of functional channels containing homodimeric KCNK1. Interacts with KCNK3 and KCNK9, forming functional heterodimeric channels. Interacts with GNG4. Identified in a complex with PSD and ARF6; interacts only with PSD that is bound to ARF6. Interacts with UBE2I. Post-translationally, sumoylation is controversial. Sumoylated by UBE2I. Not sumoylated when expressed in xenopus oocytes or mammalian cells. Sumoylation inactivates the channel, but does not interfere with expression at the cell membrane. Sumoylation of a single subunit is sufficient to silence the dimeric channel. Sumoylation of KCNK1 is sufficient to silence heterodimeric channels formed by KCNK1 and KCNK3 or KCNK9. Desumoylated by SENP1; this activates the channel. Desumoylated by SENP1; this strongly increases halothane-mediated activation of heterodimeric channels formed with KCNK9. SENP1 treatment has no effect.

The protein resides in the cell membrane. Its subcellular location is the recycling endosome. It is found in the synaptic cell membrane. The protein localises to the cytoplasmic vesicle. It localises to the perikaryon. The protein resides in the cell projection. Its subcellular location is the dendrite. It is found in the apical cell membrane. It carries out the reaction K(+)(in) = K(+)(out). The enzyme catalyses NH4(+)(in) = NH4(+)(out). The catalysed reaction is Na(+)(in) = Na(+)(out). It catalyses the reaction Rb(+)(in) = Rb(+)(out). It carries out the reaction Cs(+)(in) = Cs(+)(out). The enzyme catalyses Li(+)(in) = Li(+)(out). The catalysed reaction is L-glutamate(out) = L-glutamate(in). It catalyses the reaction chloride(in) = chloride(out). Ion channel that contributes to passive transmembrane potassium transport and to the regulation of the resting membrane potential in brain astrocytes, but also in kidney and in other tissues. Forms dimeric channels through which potassium ions pass in accordance with their electrochemical gradient. The channel is selective for K(+) ions at physiological potassium concentrations and at neutral pH, but becomes permeable to Na(+) at subphysiological K(+) levels, and upon acidification of the extracellular medium. The homodimer has very low potassium channel activity, when expressed in heterologous systems, and can function as weakly inward rectifying potassium channel. Channel activity is modulated by activation of serotonin receptors. Heterodimeric channels containing KCNK1 and KCNK2 have much higher activity, and may represent the predominant form in astrocytes. Heterodimeric channels containing KCNK1 and KCNK3 or KCNK9 have much higher activity. Heterodimeric channels formed by KCNK1 and KCNK9 may contribute to halothane-sensitive currents. Mediates outward rectifying potassium currents in dentate gyrus granule cells and contributes to the regulation of their resting membrane potential. Contributes to the regulation of action potential firing in dentate gyrus granule cells and down-regulates their intrinsic excitability. In astrocytes, the heterodimer formed by KCNK1 and KCNK2 is required for rapid glutamate release in response to activation of G-protein coupled receptors, such as F2R and CNR1. Required for normal ion and water transport in the kidney. Contributes to the regulation of the resting membrane potential of pancreatic beta cells. The low channel activity of homodimeric KCNK1 may be due to sumoylation. The low channel activity may be due to rapid internalization from the cell membrane and retention in recycling endosomes. Permeable to monovalent cations with ion selectivity for K(+) &gt; Rb(+) &gt;&gt; NH4(+) &gt;&gt; Cs(+) = Na(+) = Li(+). This is Potassium channel subfamily K member 1 from Pongo abelii (Sumatran orangutan).